A 267-amino-acid chain; its full sequence is MLLVLIDVDGFMGQLYNENGTQTILIPREVVIFYWEKNTASKILQLFFHGGIDPIFEKINQRSFSFQSRHIHHFTLDESPLPNSIALPTDTLQAFKAGKKMIFQHLVKITKDHEQILLLHKGGPEGEWVRSFNIPNATVQNLNDLCCPSVEKLVLKKRDYISSSIGCPKHIQGSNHCPVFECHVLFKWIQENTSIVQGVLKRPSLPYEEAVLFIEHRINMVDNHPFKKDSVKQNQKKKNWIATQFVQHGIYVDNGILSKIYNKYSLF.

The protein belongs to the asfivirus I267L family. In terms of assembly, interacts with host RNF135.

Functionally, plays a role in the inhibition of host RNA Pol-III-RIGI-mediated innate antiviral response. Mechanistically, interacts with host E3 ubiquitin ligase RNF135, disrupting RNF135-RIGI interaction and impairing RNF135-mediated 'Lys-63'-polyubiquitination and activation of RIGI. The polypeptide is Protein I267L (African swine fever virus (strain Badajoz 1971 Vero-adapted) (Ba71V)).